The chain runs to 130 residues: Large ribosomal subunit protein bL12 (130 aa).

Belongs to the bacterial ribosomal protein bL12 family. Homodimer. Part of the ribosomal stalk of the 50S ribosomal subunit. Forms a multimeric L10(L12)X complex, where L10 forms an elongated spine to which 2 to 4 L12 dimers bind in a sequential fashion. Binds GTP-bound translation factors.

Functionally, forms part of the ribosomal stalk which helps the ribosome interact with GTP-bound translation factors. Is thus essential for accurate translation. This chain is Large ribosomal subunit protein bL12, found in Mycolicibacterium gilvum (strain PYR-GCK) (Mycobacterium gilvum (strain PYR-GCK)).